A 963-amino-acid chain; its full sequence is Bifunctional glutamine synthetase adenylyltransferase/adenylyl-removing enzyme (963 aa).

The tract at residues 1–453 (MLTTLIPLSQ…IFNEIIGEEE (453 aa)) is adenylyl removase. The tract at residues 461 to 963 (VNEKLAEWKD…VREMWQRLLA (503 aa)) is adenylyl transferase.

This sequence belongs to the GlnE family. The cofactor is Mg(2+).

It catalyses the reaction [glutamine synthetase]-O(4)-(5'-adenylyl)-L-tyrosine + phosphate = [glutamine synthetase]-L-tyrosine + ADP. It carries out the reaction [glutamine synthetase]-L-tyrosine + ATP = [glutamine synthetase]-O(4)-(5'-adenylyl)-L-tyrosine + diphosphate. In terms of biological role, involved in the regulation of glutamine synthetase GlnA, a key enzyme in the process to assimilate ammonia. When cellular nitrogen levels are high, the C-terminal adenylyl transferase (AT) inactivates GlnA by covalent transfer of an adenylyl group from ATP to specific tyrosine residue of GlnA, thus reducing its activity. Conversely, when nitrogen levels are low, the N-terminal adenylyl removase (AR) activates GlnA by removing the adenylyl group by phosphorolysis, increasing its activity. The regulatory region of GlnE binds the signal transduction protein PII (GlnB) which indicates the nitrogen status of the cell. This is Bifunctional glutamine synthetase adenylyltransferase/adenylyl-removing enzyme from Mannheimia haemolytica (Pasteurella haemolytica).